The chain runs to 293 residues: Proline iminopeptidase (293 aa).

One can recognise an AB hydrolase-1 domain in the interval 28–277; the sequence is KPLVLLHGGP…YSRHMPFVEE (250 aa). The active-site Nucleophile is S104. D244 is an active-site residue. Catalysis depends on H271, which acts as the Proton donor.

Belongs to the peptidase S33 family.

It carries out the reaction Release of N-terminal proline from a peptide.. In terms of biological role, releases the N-terminal proline from various substrates. The sequence is that of Proline iminopeptidase from Clostridioides difficile (strain 630) (Peptoclostridium difficile).